Reading from the N-terminus, the 377-residue chain is Flap endonuclease 1 (377 aa).

Residues 1-105 (MGIKGLSQVI…GELAKRASRQ (105 aa)) are N-domain. Asp34 contributes to the Mg(2+) binding site. DNA-binding residues include Arg47 and Arg71. Mg(2+) is bound at residue Asp87. The tract at residues 96–115 (GELAKRASRQQKAREEREEA) is disordered. Positions 123 to 254 (MVDKFAKRTV…ARAVELIRQH (132 aa)) are I-domain. Residues Glu159, Glu161, Asp180, and Asp182 each coordinate Mg(2+). Residue Glu159 coordinates DNA. DNA is bound by residues Gly232 and Asp234. Asp234 serves as a coordination point for Mg(2+). The tract at residues 337–345 (PQGRLDSFF) is interaction with PCNA. Residues 350-377 (STKKEKEKPKAAAKRKRDTKSSAPKKKR) form a disordered region. Over residues 360–377 (AAAKRKRDTKSSAPKKKR) the composition is skewed to basic residues.

The protein belongs to the XPG/RAD2 endonuclease family. FEN1 subfamily. Interacts with PCNA. Three molecules of rad2 bind to one PCNA trimer with each molecule binding to one PCNA monomer. PCNA stimulates the nuclease activity without altering cleavage specificity. Requires Mg(2+) as cofactor. Post-translationally, phosphorylated. Phosphorylation upon DNA damage induces relocalization to the nuclear plasma.

The protein resides in the nucleus. It localises to the nucleolus. Its subcellular location is the nucleoplasm. It is found in the mitochondrion. In terms of biological role, structure-specific nuclease with 5'-flap endonuclease and 5'-3' exonuclease activities involved in DNA replication and repair. During DNA replication, cleaves the 5'-overhanging flap structure that is generated by displacement synthesis when DNA polymerase encounters the 5'-end of a downstream Okazaki fragment. It enters the flap from the 5'-end and then tracks to cleave the flap base, leaving a nick for ligation. Also involved in the long patch base excision repair (LP-BER) pathway, by cleaving within the apurinic/apyrimidinic (AP) site-terminated flap. Acts as a genome stabilization factor that prevents flaps from equilibrating into structures that lead to duplications and deletions. Also possesses 5'-3' exonuclease activity on nicked or gapped double-stranded DNA, and exhibits RNase H activity. Also involved in replication and repair of rDNA and in repairing mitochondrial DNA. The sequence is that of Flap endonuclease 1 from Schizosaccharomyces japonicus (strain yFS275 / FY16936) (Fission yeast).